Here is a 185-residue protein sequence, read N- to C-terminus: Ribosome-recycling factor (185 aa).

The protein belongs to the RRF family.

It is found in the cytoplasm. Responsible for the release of ribosomes from messenger RNA at the termination of protein biosynthesis. May increase the efficiency of translation by recycling ribosomes from one round of translation to another. The polypeptide is Ribosome-recycling factor (Alteromonas mediterranea (strain DSM 17117 / CIP 110805 / LMG 28347 / Deep ecotype)).